Consider the following 824-residue polypeptide: Leucine--tRNA ligase (824 aa).

A 'HIGH' region motif is present at residues 41–51 (PYPSGTLHVGH). A 'KMSKS' region motif is present at residues 580–584 (KMSKS). Residue Lys-583 participates in ATP binding.

The protein belongs to the class-I aminoacyl-tRNA synthetase family.

It is found in the cytoplasm. The enzyme catalyses tRNA(Leu) + L-leucine + ATP = L-leucyl-tRNA(Leu) + AMP + diphosphate. This is Leucine--tRNA ligase from Thermotoga petrophila (strain ATCC BAA-488 / DSM 13995 / JCM 10881 / RKU-1).